Consider the following 353-residue polypeptide: Probable dual-specificity RNA methyltransferase RlmN (353 aa).

Glutamate 104 (proton acceptor) is an active-site residue. The 230-residue stretch at 112 to 341 (DGGRKTICIS…ILNRRSPGKD (230 aa)) folds into the Radical SAM core domain. Cysteine 119 and cysteine 346 are oxidised to a cystine. [4Fe-4S] cluster contacts are provided by cysteine 126, cysteine 130, and cysteine 133. Residues 173 to 174 (GE), serine 205, 228 to 230 (SLN), and asparagine 304 contribute to the S-adenosyl-L-methionine site. Cysteine 346 functions as the S-methylcysteine intermediate in the catalytic mechanism.

The protein belongs to the radical SAM superfamily. RlmN family. It depends on [4Fe-4S] cluster as a cofactor.

Its subcellular location is the cytoplasm. The enzyme catalyses adenosine(2503) in 23S rRNA + 2 reduced [2Fe-2S]-[ferredoxin] + 2 S-adenosyl-L-methionine = 2-methyladenosine(2503) in 23S rRNA + 5'-deoxyadenosine + L-methionine + 2 oxidized [2Fe-2S]-[ferredoxin] + S-adenosyl-L-homocysteine. It carries out the reaction adenosine(37) in tRNA + 2 reduced [2Fe-2S]-[ferredoxin] + 2 S-adenosyl-L-methionine = 2-methyladenosine(37) in tRNA + 5'-deoxyadenosine + L-methionine + 2 oxidized [2Fe-2S]-[ferredoxin] + S-adenosyl-L-homocysteine. In terms of biological role, specifically methylates position 2 of adenine 2503 in 23S rRNA and position 2 of adenine 37 in tRNAs. This Leptospira interrogans serogroup Icterohaemorrhagiae serovar copenhageni (strain Fiocruz L1-130) protein is Probable dual-specificity RNA methyltransferase RlmN.